A 448-amino-acid polypeptide reads, in one-letter code: Methylenetetrahydrofolate--tRNA-(uracil-5-)-methyltransferase TrmFO (448 aa).

Residue 13-18 (GAGLAG) participates in FAD binding.

Belongs to the MnmG family. TrmFO subfamily. FAD serves as cofactor.

It is found in the cytoplasm. It carries out the reaction uridine(54) in tRNA + (6R)-5,10-methylene-5,6,7,8-tetrahydrofolate + NADH + H(+) = 5-methyluridine(54) in tRNA + (6S)-5,6,7,8-tetrahydrofolate + NAD(+). It catalyses the reaction uridine(54) in tRNA + (6R)-5,10-methylene-5,6,7,8-tetrahydrofolate + NADPH + H(+) = 5-methyluridine(54) in tRNA + (6S)-5,6,7,8-tetrahydrofolate + NADP(+). Its function is as follows. Catalyzes the folate-dependent formation of 5-methyl-uridine at position 54 (M-5-U54) in all tRNAs. The chain is Methylenetetrahydrofolate--tRNA-(uracil-5-)-methyltransferase TrmFO from Streptococcus pyogenes serotype M2 (strain MGAS10270).